The primary structure comprises 188 residues: MATHSTNEFRGGLKVMVDGDPCSIIDNEFVKPGKGQAFNRVKFRNLKTGRVLERTFKSGETLPAADVVEVEMQYSYNDGEFWHFMTSENYEQHAASKEAVAEAKQWLKEEALCMVTMWNGVPLSVEPPNFVELKITETEPGVRGDTATGGTKRAKLETGAVVRVPLFLNEGEIIKVDTRRGEYVSRAK.

The residue at position 34 (lysine 34) is an N6-(3,6-diaminohexanoyl)-5-hydroxylysine.

It belongs to the elongation factor P family. In terms of processing, may be beta-lysylated on the epsilon-amino group of Lys-34 by the combined action of EpmA and EpmB, and then hydroxylated on the C5 position of the same residue by EpmC (if this protein is present). Lysylation is critical for the stimulatory effect of EF-P on peptide-bond formation. The lysylation moiety may extend toward the peptidyltransferase center and stabilize the terminal 3-CCA end of the tRNA. Hydroxylation of the C5 position on Lys-34 may allow additional potential stabilizing hydrogen-bond interactions with the P-tRNA.

It is found in the cytoplasm. It participates in protein biosynthesis; polypeptide chain elongation. In terms of biological role, involved in peptide bond synthesis. Alleviates ribosome stalling that occurs when 3 or more consecutive Pro residues or the sequence PPG is present in a protein, possibly by augmenting the peptidyl transferase activity of the ribosome. Modification of Lys-34 is required for alleviation. In Coxiella burnetii (strain CbuK_Q154) (Coxiella burnetii (strain Q154)), this protein is Elongation factor P.